Here is a 459-residue protein sequence, read N- to C-terminus: Trichothecene 3-O-acetyltransferase TRI101 (459 aa).

The Ca(2+) site is built by Asp-218 and Ile-221. CoA contacts are provided by residues Lys-253, 266–269, Asp-302, Gln-318, and Arg-343; that span reads FVST. Ca(2+) is bound at residue Asp-376. CoA-binding residues include Ser-386 and Lys-390. Glu-449 serves as a coordination point for Ca(2+).

This sequence belongs to the trichothecene 3-O-acetyltransferase family.

It functions in the pathway sesquiterpene biosynthesis; trichothecene biosynthesis. Its function is as follows. 3-O-acetyltransferase involved in the biosynthesis of trichothecenes, a very large family of chemically related bicyclic sesquiterpene compounds acting as mycotoxins, including T2-toxin. The biosynthesis of trichothecenes begins with the cyclization of farnesyl diphosphate to trichodiene and is catalyzed by the trichodiene synthase TRI5. Trichodiene undergoes a series of oxygenations catalyzed by the cytochrome P450 monooxygenase TRI4. TRI4 controls the addition of four oxygens at C-2, C-3, C-11, and the C-12, C-13-epoxide to form the intermediate isotrichotriol. Isotrichotriol then undergoes a non-enzymatic isomerization and cyclization to form isotrichodermol. During this process, the oxygen at the C-2 position becomes the pyran ring oxygen and the hydroxyl group at C-11 is lost. More complex type A trichothecenes are built by modifying isotrichodermol through a series of paired hydroxylation and acetylation or acylation steps. Isotrichodermol is converted to isotrichodermin by the acetyltransferase TRI101. TRI101 encodes a C-3 transacetylase that acts as a self-protection or resistance factor during biosynthesis and that the presence of a free C-3 hydroxyl group is a key component of Fusarium trichothecene phytotoxicity. A second hydroxyl group is added to C-15 by the trichothecene C-15 hydroxylase TRI11, producing 15-decalonectrin, which is then acetylated by TRI3, producing calonectrin. A third hydroxyl group is added at C-4 by the cytochrome P450 monooxygenase TRI13, converting calonectrin to 3,15-diacetoxyspirpenol, which is subsequently acetylated bythe acetyltransferase TRI7. A fourth hydroxyl group is added to C-8 by the cytochrome P450 monooxygenase TRI1, followed by the addition of an isovaleryl moiety by TRI16. Finally, the acetyl group is removed from the C-3 position by the trichothecene C-3 esterase TRI8 to produce T-2 toxin. The chain is Trichothecene 3-O-acetyltransferase TRI101 from Fusarium sporotrichioides.